The primary structure comprises 514 residues: L-threonine dehydratase biosynthetic IlvA (514 aa).

At K62 the chain carries N6-(pyridoxal phosphate)lysine. Pyridoxal 5'-phosphate contacts are provided by residues N89, 188–192 (GGGGL), and S315. ACT-like domains are found at residues 339 to 411 (ALLA…DLSD) and 434 to 504 (RLYS…DETN).

This sequence belongs to the serine/threonine dehydratase family. Homotetramer. Pyridoxal 5'-phosphate serves as cofactor.

It catalyses the reaction L-threonine = 2-oxobutanoate + NH4(+). The protein operates within amino-acid biosynthesis; L-isoleucine biosynthesis; 2-oxobutanoate from L-threonine: step 1/1. Isoleucine allosterically inhibits whereas valine allosterically activates this enzyme. Functionally, catalyzes the anaerobic formation of alpha-ketobutyrate and ammonia from threonine in a two-step reaction. The first step involved a dehydration of threonine and a production of enamine intermediates (aminocrotonate), which tautomerizes to its imine form (iminobutyrate). Both intermediates are unstable and short-lived. The second step is the nonenzymatic hydrolysis of the enamine/imine intermediates to form 2-ketobutyrate and free ammonia. In the low water environment of the cell, the second step is accelerated by RidA. The polypeptide is L-threonine dehydratase biosynthetic IlvA (ilvA) (Escherichia coli (strain K12)).